Reading from the N-terminus, the 219-residue chain is Phosphatidylinositol phosphate synthase (219 aa).

29 to 32 (NQLT) lines the a CDP-1,2-diacyl-sn-glycerol pocket. 2 helical membrane-spanning segments follow: residues 31–47 (LTLVSAGLTVGVALLLI) and 53–72 (IWAAVLTGLFAAFDMIDGTV). Mg(2+) is bound by residues Asp66 and Asp69. Positions 70, 74, and 80 each coordinate a CDP-1,2-diacyl-sn-glycerol. Mg(2+) contacts are provided by Asp87 and Asp91. Asp91 serves as the catalytic Proton acceptor. Transmembrane regions (helical) follow at residues 93–110 (ITDGALFGAITWWLVYSY), 116–133 (LVAASLVCLVASQVISYV), 154–171 (RLIVSLVGLGLTGMGVPY), and 177–194 (LWALAAGSIYTVVQRLVM).

The protein belongs to the CDP-alcohol phosphatidyltransferase class-I family. In terms of assembly, homodimer. It depends on Mg(2+) as a cofactor.

Its subcellular location is the cell membrane. It catalyses the reaction a CDP-1,2-diacyl-sn-glycerol + 1D-myo-inositol 3-phosphate = a 1,2-diacyl-sn-glycero-3-phospho-(1D-myo-inositol-3-phosphate) + CMP + H(+). The enzyme catalyses 1,2-di-(9Z-octadecenoyl)-sn-glycero-3-cytidine-5'-diphosphate + 1D-myo-inositol 3-phosphate = 1,2-di-(9Z-octadecenoyl)-sn-glycero-3-phospho-(1D-myo-inositol-3-phosphate) + CMP + H(+). It functions in the pathway phospholipid metabolism; phosphatidylinositol phosphate biosynthesis. In terms of biological role, catalyzes the conjugation of the 1'-hydroxyl group of D-myo-inositol-3-phosphate (also named L-myo-inositol-1-phosphate) with a lipid tail of cytidine diphosphate diacylglycerol (CDP-DAG), forming phosphatidylinositol phosphate (PIP) and CMP. PIP is a precursor of phosphatidylinositol (PI) which is an essential lipid required for cell wall formation. This chain is Phosphatidylinositol phosphate synthase, found in Corynebacterium glutamicum (strain ATCC 13032 / DSM 20300 / JCM 1318 / BCRC 11384 / CCUG 27702 / LMG 3730 / NBRC 12168 / NCIMB 10025 / NRRL B-2784 / 534).